The chain runs to 134 residues: Profilin-5 (134 aa).

The protein belongs to the profilin family. As to quaternary structure, occurs in many kinds of cells as a complex with monomeric actin in a 1:1 ratio. Specifically expressed in mature pollen grains. Expressed in germinating pollen grains. Expressed in growing pollen tubes (at protein level).

Its subcellular location is the cytoplasm. It is found in the cytoskeleton. Its function is as follows. Binds to actin monomers and regulates the organization of the actin cytoskeleton. At high concentrations, profilin prevents the polymerization of actin, whereas it enhances it at low concentrations. At low concentrations, associates with the poly-proline motif of formins to enhance actin filament elongation rate. Acts redundantly with PRF4 to regulate apical actin polymerization at the tip of pollen tube and control polarized pollen tube growth. Functions probably by favoring formin-mediated actin polymerization at pollen tube tips. In Arabidopsis thaliana (Mouse-ear cress), this protein is Profilin-5.